A 249-amino-acid polypeptide reads, in one-letter code: Probable transcriptional regulatory protein LIC_12886 (249 aa).

This sequence belongs to the TACO1 family.

It is found in the cytoplasm. The chain is Probable transcriptional regulatory protein LIC_12886 from Leptospira interrogans serogroup Icterohaemorrhagiae serovar copenhageni (strain Fiocruz L1-130).